The following is a 314-amino-acid chain: Mitotic checkpoint protein BUB3.3 (314 aa).

WD repeat units follow at residues 11 to 50, 52 to 90, 92 to 131, 134 to 173, 176 to 215, 229 to 269, and 272 to 311; these read PIED…LSLE, NSQA…VDTI, RHDD…SLVF, DAGG…QSYA, VEVP…SEIK, LDGV…RLNE, and RYSN…QVFI.

It belongs to the WD repeat BUB3 family. As to quaternary structure, part of the mitotic checkpoint complex (MCC).

It is found in the nucleus. The protein resides in the chromosome. The protein localises to the centromere. Its subcellular location is the kinetochore. It localises to the cytoplasm. It is found in the cytoskeleton. The protein resides in the phragmoplast. The protein localises to the spindle. Its function is as follows. Has a dual function in spindle-assembly checkpoint signaling and in promoting the establishment of correct kinetochore-microtubule (K-MT) attachments. Promotes the formation of stable end-on bipolar attachments. Necessary for kinetochore localization of BUB1. The BUB1/BUB3 complex plays a role in the inhibition of anaphase-promoting complex or cyclosome (APC/C) when spindle-assembly checkpoint is activated and inhibits the ubiquitin ligase activity of APC/C by phosphorylating its activator CDC20. The sequence is that of Mitotic checkpoint protein BUB3.3 (BUB3.3) from Arabidopsis thaliana (Mouse-ear cress).